Consider the following 90-residue polypeptide: Acylphosphatase (90 aa).

The 88-residue stretch at 3–90 folds into the Acylphosphatase-like domain; that stretch reads QYHMIADGRV…KGYRTFSISY (88 aa). Active-site residues include Arg18 and Asn36.

It belongs to the acylphosphatase family.

The enzyme catalyses an acyl phosphate + H2O = a carboxylate + phosphate + H(+). This chain is Acylphosphatase (acyP), found in Bacillus velezensis (strain DSM 23117 / BGSC 10A6 / LMG 26770 / FZB42) (Bacillus amyloliquefaciens subsp. plantarum).